A 246-amino-acid chain; its full sequence is 2-C-methyl-D-erythritol 4-phosphate cytidylyltransferase (246 aa).

This sequence belongs to the IspD/TarI cytidylyltransferase family. IspD subfamily.

The catalysed reaction is 2-C-methyl-D-erythritol 4-phosphate + CTP + H(+) = 4-CDP-2-C-methyl-D-erythritol + diphosphate. It functions in the pathway isoprenoid biosynthesis; isopentenyl diphosphate biosynthesis via DXP pathway; isopentenyl diphosphate from 1-deoxy-D-xylulose 5-phosphate: step 2/6. Its function is as follows. Catalyzes the formation of 4-diphosphocytidyl-2-C-methyl-D-erythritol from CTP and 2-C-methyl-D-erythritol 4-phosphate (MEP). This Chlorobaculum parvum (strain DSM 263 / NCIMB 8327) (Chlorobium vibrioforme subsp. thiosulfatophilum) protein is 2-C-methyl-D-erythritol 4-phosphate cytidylyltransferase.